Here is a 396-residue protein sequence, read N- to C-terminus: Putative nickel insertion protein (396 aa).

The protein belongs to the LarC family.

This is Putative nickel insertion protein from Methanococcoides burtonii (strain DSM 6242 / NBRC 107633 / OCM 468 / ACE-M).